A 271-amino-acid chain; its full sequence is Glutamate racemase (271 aa).

Substrate is bound by residues 10 to 11 (DS) and 42 to 43 (YG). Residue C73 is the Proton donor/acceptor of the active site. 74 to 75 (NT) is a substrate binding site. The active-site Proton donor/acceptor is C183. 184-185 (TH) provides a ligand contact to substrate.

It belongs to the aspartate/glutamate racemases family.

It catalyses the reaction L-glutamate = D-glutamate. It functions in the pathway cell wall biogenesis; peptidoglycan biosynthesis. Functionally, provides the (R)-glutamate required for cell wall biosynthesis. The protein is Glutamate racemase of Lactococcus lactis subsp. cremoris (strain SK11).